The following is a 758-amino-acid chain: ATP-dependent RNA helicase dbp7 (758 aa).

Disordered regions lie at residues 26–99 (GGTW…QPRQ) and 111–130 (PQKVEEVKEEGHVEDAKPTN). Residues 35-45 (AKKIAKHHAKG) are compositionally biased toward basic residues. Polar residues predominate over residues 84–99 (GKQQSHTHPHSNQPRQ). Basic and acidic residues predominate over residues 111 to 127 (PQKVEEVKEEGHVEDAK). The Q motif signature appears at 138–167 (DTFTNLGLSPSLAAHLLTKLELKAPTAIQK). The region spanning 171-372 (SQLLKEEGDA…EISLKDAVHI (202 aa)) is the Helicase ATP-binding domain. Residue 184-191 (AETGSGKT) coordinates ATP. The DEAD box motif lies at 308-311 (DEGD). The 206-residue stretch at 398 to 603 (QLKQSYAVVA…ALTRADANDI (206 aa)) folds into the Helicase C-terminal domain. 2 disordered regions span residues 455 to 483 (KEDGDESSDTDKSEDKPPSSPHGTIAPAT) and 691 to 758 (VPGL…FNLA). Residues 696 to 709 (QGKEETKKDFKAER) are compositionally biased toward basic and acidic residues.

The protein belongs to the DEAD box helicase family. DDX31/DBP7 subfamily.

It is found in the nucleus. The protein resides in the nucleolus. It catalyses the reaction ATP + H2O = ADP + phosphate + H(+). Its function is as follows. ATP-binding RNA helicase involved in the biogenesis of 60S ribosomal subunits and is required for the normal formation of 25S and 5.8S rRNAs. The protein is ATP-dependent RNA helicase dbp7 (dbp7) of Neosartorya fischeri (strain ATCC 1020 / DSM 3700 / CBS 544.65 / FGSC A1164 / JCM 1740 / NRRL 181 / WB 181) (Aspergillus fischerianus).